The sequence spans 186 residues: uncharacterized protein (186 aa).

This is an uncharacterized protein from Trypanosoma brucei brucei.